The chain runs to 154 residues: CASP-like protein 5B3 (154 aa).

Over 1–17 (MKDVVGSPGTWSGMSLR) the chain is Cytoplasmic. The chain crosses the membrane as a helical span at residues 18–38 (VSQCVFAGASVVAMASAYGFS). A glycan (N-linked (GlcNAc...) asparagine) is linked at asparagine 39. Over 39–42 (NYTA) the chain is Extracellular. A helical transmembrane segment spans residues 43-63 (FCYLIASMGLQLLWSFGLACL). Residues 64–77 (DIYSLQTKRDLHNP) lie on the Cytoplasmic side of the membrane. The chain crosses the membrane as a helical span at residues 78 to 98 (VLVSLFVVGDWVTAILSFAAA). Topologically, residues 99-129 (SASAGVTILFERDVHFCRMYPQLSCGRYELS) are extracellular. The chain crosses the membrane as a helical span at residues 130 to 150 (VILAFITWSFIATSAVSMFWL). Residues 151–154 (LASL) lie on the Cytoplasmic side of the membrane.

It belongs to the Casparian strip membrane proteins (CASP) family. As to quaternary structure, homodimer and heterodimers.

The protein localises to the cell membrane. This chain is CASP-like protein 5B3, found in Oryza sativa subsp. indica (Rice).